A 103-amino-acid polypeptide reads, in one-letter code: uncharacterized protein (103 aa).

This is an uncharacterized protein from Acanthamoeba polyphaga (Amoeba).